Consider the following 226-residue polypeptide: Thiopurine S-methyltransferase (226 aa).

S-adenosyl-L-methionine contacts are provided by Trp10, Leu47, Glu68, and Arg130.

Belongs to the class I-like SAM-binding methyltransferase superfamily. TPMT family.

It is found in the cytoplasm. The catalysed reaction is S-adenosyl-L-methionine + a thiopurine = S-adenosyl-L-homocysteine + a thiopurine S-methylether.. This chain is Thiopurine S-methyltransferase, found in Shewanella sediminis (strain HAW-EB3).